Here is a 335-residue protein sequence, read N- to C-terminus: Biotin synthase (335 aa).

Residues 46–274 enclose the Radical SAM core domain; that stretch reads YNIQLASLFS…KSKIRLSAGR (229 aa). 3 residues coordinate [4Fe-4S] cluster: Cys61, Cys65, and Cys68. Residues Cys105, Cys137, Cys197, and Arg269 each contribute to the [2Fe-2S] cluster site.

Belongs to the radical SAM superfamily. Biotin synthase family. Homodimer. It depends on [4Fe-4S] cluster as a cofactor. [2Fe-2S] cluster serves as cofactor.

It catalyses the reaction (4R,5S)-dethiobiotin + (sulfur carrier)-SH + 2 reduced [2Fe-2S]-[ferredoxin] + 2 S-adenosyl-L-methionine = (sulfur carrier)-H + biotin + 2 5'-deoxyadenosine + 2 L-methionine + 2 oxidized [2Fe-2S]-[ferredoxin]. The protein operates within cofactor biosynthesis; biotin biosynthesis; biotin from 7,8-diaminononanoate: step 2/2. Functionally, catalyzes the conversion of dethiobiotin (DTB) to biotin by the insertion of a sulfur atom into dethiobiotin via a radical-based mechanism. The polypeptide is Biotin synthase (Prochlorococcus marinus (strain MIT 9312)).